The primary structure comprises 685 residues: MTSPAPEHSAAPLRVPAGTTAGTAVREAGYPTKGPDVIVVVRDGEGTLKDLSWTPEVDVDVEPVAASTEDGRSVIRHSAAHVLAQAVQKEFPDAKLGIGPPIKDGFYYDFAVDRPFTPEDLAKLEKRMKQIIKGSQRFSRRVVDSIEDARVELADEPFKLELIDDKSGIDDPEIMEVGGNELTIYDNLDPRTGDKIWSDLCRGPHIPTTKHIPAFKLTRSSAAYWRGNQDNADLQRVYGTAWESTEAQDEYLELLAEAERRDHRKLGTELDLFSFPDELGSGLPVFHPKGGIIRTEMENYSRSRHIEAGYEFVNTPHITKGHLYEVSGHLDWYRDGMFPAMHVDEELNEDGTVRKPGQDYYLKPMNCPMHNLIFRARGRSYRELPLRLFEFGSVYRYEKSGVIHGLTRVRGMTQDDAHIYCTREQMRDELTTTLQFVLNLLKDYGLDDFYLELSTKNPDKFVGSDDVWEEATATLAEVGEASGLTLVPDPGGAAFYGPKISVQVKDALGRTWQMSTIQLDFNLPERFELEYTGNDGVKTRPVMIHRALFGSIERFFGVLTEHYAGAFPAWLAPVQVVGIPVAEAFADHLFDVTKKLKAAGVRAEVDFSDDRMQKKIRNHTTQKVPFMLLAGERDVEAGAVSFRFRDGTQINGIPVDDAVRIITEWIGRRENASPTAELVQPSVAQ.

A disordered region spans residues 1-28; that stretch reads MTSPAPEHSAAPLRVPAGTTAGTAVREA. The TGS domain occupies 1–65; that stretch reads MTSPAPEHSA…EVDVDVEPVA (65 aa). Positions 262–568 are catalytic; sequence DHRKLGTELD…LTEHYAGAFP (307 aa). Cysteine 367, histidine 418, and histidine 545 together coordinate Zn(2+).

The protein belongs to the class-II aminoacyl-tRNA synthetase family. As to quaternary structure, homodimer. Requires Zn(2+) as cofactor.

The protein localises to the cytoplasm. It catalyses the reaction tRNA(Thr) + L-threonine + ATP = L-threonyl-tRNA(Thr) + AMP + diphosphate + H(+). In terms of biological role, catalyzes the attachment of threonine to tRNA(Thr) in a two-step reaction: L-threonine is first activated by ATP to form Thr-AMP and then transferred to the acceptor end of tRNA(Thr). Also edits incorrectly charged L-seryl-tRNA(Thr). This is Threonine--tRNA ligase from Rhodococcus erythropolis (strain PR4 / NBRC 100887).